A 555-amino-acid polypeptide reads, in one-letter code: Connector enhancer of kinase suppressor of ras 3 (555 aa).

The region spanning 7 to 72 (WSPKQVVDWT…LEAVDLLCAL (66 aa)) is the SAM domain. A CRIC domain is found at 80–174 (NMKNLVLKLR…TAVQKDCLVA (95 aa)). The region spanning 211–293 (EVHLPNVRPG…GVVLLLKKRP (83 aa)) is the PDZ domain. 3 disordered regions span residues 308-333 (RWKPPLVQTSPPPTTTQSPESTMDAS), 348-391 (PPPA…LDQE), and 518-538 (PFQEEGPKKKSASSSAKASSG). Residues 311-329 (PPLVQTSPPPTTTQSPEST) show a composition bias toward low complexity. The DUF1170 domain occupies 325-546 (SPESTMDASL…SGEPSLLVSW (222 aa)). Residues Ser381 and Ser383 each carry the phosphoserine modification.

It belongs to the CNKSR family. Interacts with epithelial sodium channel ENaC. Interacts directly with SCNN1A (ENaC subunit alpha) and SCNN1B (ENaC subunit beta) C-terminal tails. Interacts with ENaC regulatory proteins NEDD4L, RAF1 and SGK1.

The protein resides in the cytoplasm. It localises to the apical cell membrane. In terms of biological role, involved in transepithelial sodium transport. Regulates aldosterone-induced and epithelial sodium channel (ENaC)-mediated sodium transport through regulation of ENaC cell surface expression. Acts as a scaffold protein coordinating the assembly of an ENaC-regulatory complex (ERC). The chain is Connector enhancer of kinase suppressor of ras 3 (Cnksr3) from Rattus norvegicus (Rat).